A 736-amino-acid chain; its full sequence is Polyribonucleotide nucleotidyltransferase (736 aa).

The Mg(2+) site is built by aspartate 488 and aspartate 494. The KH domain occupies 555–614 (PMVQTLEIQKEKIRDVIGLGGKVIKELCKTFDVEIDISENGEVKVWGNVGENVKKAVQSI). The S1 motif domain occupies 624-692 (GDIFDGEVVK…HKNRVKLTLR (69 aa)).

Belongs to the polyribonucleotide nucleotidyltransferase family. It depends on Mg(2+) as a cofactor.

The protein localises to the cytoplasm. The catalysed reaction is RNA(n+1) + phosphate = RNA(n) + a ribonucleoside 5'-diphosphate. Its function is as follows. Involved in mRNA degradation. Catalyzes the phosphorolysis of single-stranded polyribonucleotides processively in the 3'- to 5'-direction. This Orientia tsutsugamushi (strain Ikeda) (Rickettsia tsutsugamushi) protein is Polyribonucleotide nucleotidyltransferase.